A 797-amino-acid chain; its full sequence is Phenylalanine--tRNA ligase beta subunit (797 aa).

The 115-residue stretch at 40–154 (MEGLSKLVVG…ADAKVGDSIF (115 aa)) folds into the tRNA-binding domain. The 76-residue stretch at 407 to 482 (PILPKVSITL…RIYGYDNLPS (76 aa)) folds into the B5 domain. Aspartate 460, aspartate 466, glutamate 469, and glutamate 470 together coordinate Mg(2+). The FDX-ACB domain maps to 704 to 797 (PKVQAVHRDI…LVEKLDIEIR (94 aa)).

This sequence belongs to the phenylalanyl-tRNA synthetase beta subunit family. Type 1 subfamily. As to quaternary structure, tetramer of two alpha and two beta subunits. It depends on Mg(2+) as a cofactor.

It localises to the cytoplasm. The catalysed reaction is tRNA(Phe) + L-phenylalanine + ATP = L-phenylalanyl-tRNA(Phe) + AMP + diphosphate + H(+). The polypeptide is Phenylalanine--tRNA ligase beta subunit (Lactococcus lactis subsp. lactis (strain IL1403) (Streptococcus lactis)).